Reading from the N-terminus, the 459-residue chain is Sulfide:quinone oxidoreductase, mitochondrial (459 aa).

Residues 1–24 constitute a mitochondrion transit peptide; it reads MLTLNSTIKSVTGSFQSASMLARF. Residue 35–39 coordinates FAD; sequence GGGSA. Active-site cysteine persulfide intermediate residues include Cys204 and Cys383.

The protein belongs to the SQRD family. FAD is required as a cofactor.

The protein resides in the mitochondrion. In terms of biological role, catalyzes the oxidation of hydrogen sulfide, with the help of a quinone. This chain is Sulfide:quinone oxidoreductase, mitochondrial (hmt2), found in Schizosaccharomyces pombe (strain 972 / ATCC 24843) (Fission yeast).